A 286-amino-acid chain; its full sequence is Probable glucose uptake protein GlcU (286 aa).

10 helical membrane passes run 4–21, 28–50, 54–71, 84–106, 116–135, 154–176, 181–198, 211–228, 233–255, and 262–284; these read FLAV…LFNV, YSQT…IFVH, TPLI…WAVG, VSKT…GVIV, IILG…LASL, IVIL…LFNV, ALLP…LLTF, IIPG…FISQ, VATS…IIIL, and RQLV…LGLA.

It belongs to the GRP transporter (TC 2.A.7.5) family.

The protein localises to the cell membrane. In terms of biological role, involved in the uptake of glucose. The sequence is that of Probable glucose uptake protein GlcU (glcU) from Priestia megaterium (Bacillus megaterium).